A 144-amino-acid chain; its full sequence is MFEIGFWELVLVAIIGIVVVGPKRLPEVVRTLGLLLRKMRRTISSVRADIERELDLEEMRKLMSDVDEPLKKHVDQLNQSIWQAEYDLRQGGKNLLKMIDEPPYQEPPPAAHSVQTDAEAYRDTGIEPADKSSSPEHHHDDAAR.

The helical transmembrane segment at 1–21 (MFEIGFWELVLVAIIGIVVVG) threads the bilayer. Residues 97–144 (KMIDEPPYQEPPPAAHSVQTDAEAYRDTGIEPADKSSSPEHHHDDAAR) form a disordered region. Basic and acidic residues predominate over residues 119 to 144 (EAYRDTGIEPADKSSSPEHHHDDAAR).

It belongs to the TatB family. The Tat system comprises two distinct complexes: a TatABC complex, containing multiple copies of TatA, TatB and TatC subunits, and a separate TatA complex, containing only TatA subunits. Substrates initially bind to the TatABC complex, which probably triggers association of the separate TatA complex to form the active translocon.

Its subcellular location is the cell inner membrane. Its function is as follows. Part of the twin-arginine translocation (Tat) system that transports large folded proteins containing a characteristic twin-arginine motif in their signal peptide across membranes. Together with TatC, TatB is part of a receptor directly interacting with Tat signal peptides. TatB may form an oligomeric binding site that transiently accommodates folded Tat precursor proteins before their translocation. In Dichelobacter nodosus (strain VCS1703A), this protein is Sec-independent protein translocase protein TatB.